The sequence spans 339 residues: Glycerol-3-phosphate dehydrogenase [NAD(P)+] (339 aa).

Ser15, Tyr16, His36, and Lys110 together coordinate NADPH. 3 residues coordinate sn-glycerol 3-phosphate: Lys110, Gly139, and Thr141. Position 143 (Ala143) interacts with NADPH. Sn-glycerol 3-phosphate-binding residues include Lys195, Asp248, Ser258, Arg259, and Asn260. Lys195 acts as the Proton acceptor in catalysis. Arg259 is an NADPH binding site. Positions 283 and 285 each coordinate NADPH.

The protein belongs to the NAD-dependent glycerol-3-phosphate dehydrogenase family.

The protein resides in the cytoplasm. The enzyme catalyses sn-glycerol 3-phosphate + NAD(+) = dihydroxyacetone phosphate + NADH + H(+). It carries out the reaction sn-glycerol 3-phosphate + NADP(+) = dihydroxyacetone phosphate + NADPH + H(+). The protein operates within membrane lipid metabolism; glycerophospholipid metabolism. Functionally, catalyzes the reduction of the glycolytic intermediate dihydroxyacetone phosphate (DHAP) to sn-glycerol 3-phosphate (G3P), the key precursor for phospholipid synthesis. In Escherichia coli O17:K52:H18 (strain UMN026 / ExPEC), this protein is Glycerol-3-phosphate dehydrogenase [NAD(P)+].